The primary structure comprises 532 residues: MMHNQGNSNGDPAAPMSNLQEPQVPMLSQTPNPVPMMNAPAPLLRPAIPGARGARPPRLGLAIPPSPNVKPVGGNAAGPPLQVPSRPPLPVLHLATPMGSTVAPQEHQPNRGAQPGQSASGGSESSAAHSRTGSFGPLDGRGSNPTSAGSQYSALSFASQYGLGGAKPHGTPDPVSAVGSLYSNASEGGVGMEREGSMHGLEASFDKMSLEKARTSDAEDLDDEGWRIVSMENRIVELGGLGEGAGGAVTRCKLKGGKTVFALKVITTNPDPDIKKQILREINFNKGCASEHICRYYGGFLDPSTATISIAMEFCEGGSLDSIYKEVKRLGGRTGEKVLGKIAEGVLQGLTYLEAKRILHRDIKPSNILLCRNGEVKLCDFGVSGDFGTKGEANTFIGTSYYMAPERITGQTYTITSDVWSTGVTLLEVAQHRFPFPADGTEMQPRAGLIDLLTYIVQQPIPKLKDEPEAGIFWSDNFKHFIEACLEKNPKRRGMPWKMLEHPWMTELKTKRVNMSKYLTQVWGWDDPKGSK.

Residues Ile-235 to Met-505 form the Protein kinase domain. Residues Leu-241–Val-249 and Lys-264 contribute to the ATP site. The active-site Proton acceptor is Asp-362.

It belongs to the protein kinase superfamily. STE Ser/Thr protein kinase family. MAP kinase kinase subfamily.

It catalyses the reaction L-seryl-[protein] + ATP = O-phospho-L-seryl-[protein] + ADP + H(+). It carries out the reaction L-threonyl-[protein] + ATP = O-phospho-L-threonyl-[protein] + ADP + H(+). Mitogen-activated protein kinase kinase, part of the mkh1-mkk1-spm1 MAPK cascade that regulates regulates vegetative growth, conidial formation, colony surface hydrophobicity, osmotic stress, cell wall integrity maintenance, carbon and nitrogen source utilization, chitin distribution, septa formation, and pathogenicity. In Cytospora mali (Apple Valsa canker fungus), this protein is Mitogen-activated protein kinase kinase mkk1.